Reading from the N-terminus, the 198-residue chain is Beta-crystallin A1-1 (198 aa).

Residues 1–13 (MAQINPLPVPLGP) form an N-terminal arm region. 2 consecutive Beta/gamma crystallin 'Greek key' domains span residues 14-53 (WKIT…KVEC) and 54-100 (GAWI…RPIC). A connecting peptide region spans residues 101–106 (SANHKE). Beta/gamma crystallin 'Greek key' domains follow at residues 107–148 (SKLV…KVQC) and 149–197 (GAWV…RRIQ).

The protein belongs to the beta/gamma-crystallin family. As to quaternary structure, homo/heterodimer, or complexes of higher-order. The structure of beta-crystallin oligomers seems to be stabilized through interactions between the N-terminal arms. The N-terminus is blocked.

Crystallins are the dominant structural components of the vertebrate eye lens. The polypeptide is Beta-crystallin A1-1 (Aquarana catesbeiana (American bullfrog)).